The primary structure comprises 680 residues: DNA-directed RNA polymerase subunit beta' (680 aa).

Zn(2+)-binding residues include Cys-68, Cys-70, Cys-86, and Cys-89. Mg(2+)-binding residues include Asp-488, Asp-490, and Asp-492.

Belongs to the RNA polymerase beta' chain family. RpoC1 subfamily. As to quaternary structure, in plastids the minimal PEP RNA polymerase catalytic core is composed of four subunits: alpha, beta, beta', and beta''. When a (nuclear-encoded) sigma factor is associated with the core the holoenzyme is formed, which can initiate transcription. Mg(2+) is required as a cofactor. Zn(2+) serves as cofactor.

It is found in the plastid. The protein localises to the chloroplast. The catalysed reaction is RNA(n) + a ribonucleoside 5'-triphosphate = RNA(n+1) + diphosphate. Its function is as follows. DNA-dependent RNA polymerase catalyzes the transcription of DNA into RNA using the four ribonucleoside triphosphates as substrates. This is DNA-directed RNA polymerase subunit beta' from Nicotiana tabacum (Common tobacco).